Here is a 417-residue protein sequence, read N- to C-terminus: UDP-N-acetylglucosamine 1-carboxyvinyltransferase (417 aa).

22–23 (KN) is a phosphoenolpyruvate binding site. Position 93 (Arg93) interacts with UDP-N-acetyl-alpha-D-glucosamine. Cys117 functions as the Proton donor in the catalytic mechanism. Cys117 carries the 2-(S-cysteinyl)pyruvic acid O-phosphothioketal modification. UDP-N-acetyl-alpha-D-glucosamine contacts are provided by residues 122-126 (RPVDQ), Asp305, and Ile327.

It belongs to the EPSP synthase family. MurA subfamily.

The protein resides in the cytoplasm. It catalyses the reaction phosphoenolpyruvate + UDP-N-acetyl-alpha-D-glucosamine = UDP-N-acetyl-3-O-(1-carboxyvinyl)-alpha-D-glucosamine + phosphate. The protein operates within cell wall biogenesis; peptidoglycan biosynthesis. In terms of biological role, cell wall formation. Adds enolpyruvyl to UDP-N-acetylglucosamine. This is UDP-N-acetylglucosamine 1-carboxyvinyltransferase from Dechloromonas aromatica (strain RCB).